Here is a 418-residue protein sequence, read N- to C-terminus: Aspartate aminotransferase 1 (418 aa).

Lys264 carries the N6-(pyridoxal phosphate)lysine modification.

The protein belongs to the class-I pyridoxal-phosphate-dependent aminotransferase family. Homodimer. Pyridoxal 5'-phosphate is required as a cofactor. As to expression, nodules, roots, stems and leaves, in decreasing order of aspartate aminotransferase 1 concentration. Is the predominant aspartate aminotransferase isoenzyme in roots.

It localises to the cytoplasm. It catalyses the reaction L-aspartate + 2-oxoglutarate = oxaloacetate + L-glutamate. Its function is as follows. Important for the metabolism of amino acids and Krebs-cycle related organic acids. In plants, it is involved in nitrogen metabolism and in aspects of carbon and energy metabolism. This chain is Aspartate aminotransferase 1 (AAT-1), found in Medicago sativa (Alfalfa).